The following is a 281-amino-acid chain: Clc-like protein 5 (281 aa).

The next 4 membrane-spanning stretches (helical) occupy residues 13 to 33 (LATLISSVISNFLIFFATITP), 104 to 124 (VLILNVISMICMSLCAAAVIF), 137 to 157 (IMLDVFAGFASLLLCVSLIVF), and 184 to 204 (YYLAGLAFVISVITVLFAALV).

This sequence belongs to the Clc family.

The protein localises to the membrane. The sequence is that of Clc-like protein 5 (clc-5) from Caenorhabditis elegans.